A 147-amino-acid polypeptide reads, in one-letter code: Myoglobin (147 aa).

Residues 2–141 enclose the Globin domain; the sequence is ADFDMVLKCW…IIADMEADYK (140 aa). His60 provides a ligand contact to nitrite. O2 is bound at residue His60. His89 provides a ligand contact to heme b.

It belongs to the globin family. In terms of assembly, monomeric.

The protein resides in the cytoplasm. It is found in the sarcoplasm. It carries out the reaction Fe(III)-heme b-[protein] + nitric oxide + H2O = Fe(II)-heme b-[protein] + nitrite + 2 H(+). The enzyme catalyses H2O2 + AH2 = A + 2 H2O. Functionally, monomeric heme protein which primary function is to store oxygen and facilitate its diffusion within muscle tissues. Reversibly binds oxygen through a pentacoordinated heme iron and enables its timely and efficient release as needed during periods of heightened demand. Depending on the oxidative conditions of tissues and cells, and in addition to its ability to bind oxygen, it also has a nitrite reductase activity whereby it regulates the production of bioactive nitric oxide. Under stress conditions, like hypoxia and anoxia, it also protects cells against reactive oxygen species thanks to its pseudoperoxidase activity. The chain is Myoglobin (mb) from Notothenia neglecta (Yellowbelly rockcod).